The primary structure comprises 97 residues: Large ribosomal subunit protein bL28 (97 aa).

The protein belongs to the bacterial ribosomal protein bL28 family.

This is Large ribosomal subunit protein bL28 from Bartonella quintana (strain Toulouse) (Rochalimaea quintana).